We begin with the raw amino-acid sequence, 298 residues long: MSNAREIRSKVQSVKNTQKITGAMELVAASKMRGAIVKMNNVRPYVESANTIIKNVTMASIDYPNPYLFDREVKRVGYIVTSTDRGLCGGLNINLFKHVLKDIKKNLDDRVEVDVCAIGSKAATFFAKLIDVNVVATAHYNDKDNEGSIRAIRGALKVMLDRFTNGEIDRLYMSSNQFVSTIKQKPKLQTLLPIQDIFSKEELKTNKEQASKGHWDYIYERDIEEVLNALCIRYIEAQVRGAILENAACEQAARMMAMKNATDNASDIIDQLKLDYNKVRQAMITQELAEICSGAAAV.

Belongs to the ATPase gamma chain family. In terms of assembly, F-type ATPases have 2 components, CF(1) - the catalytic core - and CF(0) - the membrane proton channel. CF(1) has five subunits: alpha(3), beta(3), gamma(1), delta(1), epsilon(1). CF(0) has three main subunits: a, b and c.

The protein localises to the cell inner membrane. Functionally, produces ATP from ADP in the presence of a proton gradient across the membrane. The gamma chain is believed to be important in regulating ATPase activity and the flow of protons through the CF(0) complex. This chain is ATP synthase gamma chain, found in Francisella philomiragia subsp. philomiragia (strain ATCC 25017 / CCUG 19701 / FSC 153 / O#319-036).